A 354-amino-acid polypeptide reads, in one-letter code: MSLEENLSRVVARHDELRALLSTSAGGGEGFVRMSRELADLAPVVEAIGRLDDAKAELAGARALLDDPDMRDLAREEVLRLEAEIPALEHGVKLLLLPRDEADDRGVILEVRAGTGGDEAALFAGDLLRMYERYAQERGWRFEVMEASDTDIGGIKEASAAISGRGVFARLKFESGVHRVQRVPVTEGGGRIHTSAATVAVLPEAEEVDVEIEEKDLRIDTYRSQGAGGQHVNTTDSAVRITHLPSGVVAQCQDEKSQHKNKAKAMRMLRTKLYDHARQTADDARAEARRVQVGSGDRSERIRTYNFPQGRVTDHRIGLTLHRLPEVLAGTALDEVIEPLIAEDQATRMAEIGG.

N5-methylglutamine is present on glutamine 230.

The protein belongs to the prokaryotic/mitochondrial release factor family. Methylated by PrmC. Methylation increases the termination efficiency of RF1.

Its subcellular location is the cytoplasm. Its function is as follows. Peptide chain release factor 1 directs the termination of translation in response to the peptide chain termination codons UAG and UAA. The protein is Peptide chain release factor 1 of Rhodospirillum rubrum (strain ATCC 11170 / ATH 1.1.1 / DSM 467 / LMG 4362 / NCIMB 8255 / S1).